The chain runs to 1496 residues: Carbamoyl-phosphate synthase [ammonia], mitochondrial (1496 aa).

A mitochondrion-targeting transit peptide spans 1–33; it reads MTRILSVFKTAKTGVLNAAAHRYRGFSKAGVRL. Residues 34–214 form an anthranilate phosphoribosyltransferase homolog region; the sequence is MSVKAQTANL…TKVFGKGNPV (181 aa). Residues 215-401 form the Glutamine amidotransferase type-1 domain; the sequence is RIVAVDCGVK…MSLIKKGKGT (187 aa). Cys290 acts as the For GATase activity in catalysis. ATP-grasp domains are found at residues 548-740 and 1090-1281; these read SDKL…KIAL and SAVL…KVMI. The MGS-like domain occupies 1352–1496; it reads FKLPQKGILI…YRQFGGAKPS (145 aa). Residues Thr1388, Thr1391, Trp1407, Asn1433, Asn1436, and Asn1445 each coordinate N-acetyl-L-glutamate.

Its subcellular location is the mitochondrion. It catalyses the reaction hydrogencarbonate + NH4(+) + 2 ATP = carbamoyl phosphate + 2 ADP + phosphate + 2 H(+). Its activity is regulated as follows. Requires N-acetyl-L-glutamate (NAG) as an allosteric activator. Functionally, involved in the urea cycle of ureotelic animals where the enzyme plays an important role in removing excess ammonia from the cell. This chain is Carbamoyl-phosphate synthase [ammonia], mitochondrial, found in Aquarana catesbeiana (American bullfrog).